Consider the following 590-residue polypeptide: L-fucose isomerase (590 aa).

Catalysis depends on proton acceptor residues glutamate 337 and aspartate 361. 3 residues coordinate Mn(2+): glutamate 337, aspartate 361, and histidine 528.

Belongs to the L-fucose isomerase family. Mn(2+) serves as cofactor.

The protein localises to the cytoplasm. It catalyses the reaction L-fucose = L-fuculose. The protein operates within carbohydrate degradation; L-fucose degradation; L-lactaldehyde and glycerone phosphate from L-fucose: step 1/3. Converts the aldose L-fucose into the corresponding ketose L-fuculose. The sequence is that of L-fucose isomerase from Bacteroides fragilis (strain ATCC 25285 / DSM 2151 / CCUG 4856 / JCM 11019 / LMG 10263 / NCTC 9343 / Onslow / VPI 2553 / EN-2).